The following is a 437-amino-acid chain: Trigger factor (437 aa).

Residues 161-246 enclose the PPIase FKBP-type domain; the sequence is DDQVNIDFVG…VNSVSAPQLP (86 aa).

Belongs to the FKBP-type PPIase family. Tig subfamily.

Its subcellular location is the cytoplasm. It catalyses the reaction [protein]-peptidylproline (omega=180) = [protein]-peptidylproline (omega=0). Functionally, involved in protein export. Acts as a chaperone by maintaining the newly synthesized protein in an open conformation. Functions as a peptidyl-prolyl cis-trans isomerase. This is Trigger factor from Pseudomonas putida (strain W619).